Consider the following 203-residue polypeptide: MTTAPSEDLLTLARWMAGDFSNQKQALAQPQTFAHIRVFFRPLPFAFFGTVGFYSEQTYDYDLWSPYRQGLHRLLDREGGIYIENYGLQDAGLYAGAGHDPEILATIPTDCLQPRRGCAMVFRREGDCFRGSVEPGNHCLIPRDGYWTYLVSEVELTESTWVSLDRGMDRETHRQIWGSQAGPLHFEKREGFDPPLPPLGKGG.

It belongs to the CpcT/CpeT biliprotein lyase family.

In terms of biological role, covalently attaches a chromophore to Cys residue(s) of phycobiliproteins. This Gloeobacter violaceus (strain ATCC 29082 / PCC 7421) protein is Chromophore lyase CpcT/CpeT 3.